We begin with the raw amino-acid sequence, 159 residues long: Betainyl-CoA thioesterase (159 aa).

This sequence belongs to the betainyl-CoA thioesterase family.

It catalyses the reaction N,N,N-trimethylglycyl-CoA + H2O = glycine betaine + CoA + H(+). Its pathway is amine and polyamine metabolism; carnitine metabolism. Functionally, catalyzes the cleavage of betainyl-CoA (N,N,N-trimethylglycyl-CoA) into glycine betaine and coenzyme A. Is involved in a L-carnitine degradation pathway that allows P.aeruginosa to grow on L-carnitine as the sole source of carbon and nitrogen. The sequence is that of Betainyl-CoA thioesterase from Pseudomonas aeruginosa (strain ATCC 15692 / DSM 22644 / CIP 104116 / JCM 14847 / LMG 12228 / 1C / PRS 101 / PAO1).